Reading from the N-terminus, the 114-residue chain is MNLIESINAAQLRTDIPDFRPGDTVRVHAKVVEGTRERIQIFEGVVIARKNSGINETYTVRKISNGVGVERIFPVHTPRVEKIEVIRHGKVRRAKLYYLRALTGKKARIAERRR.

It belongs to the bacterial ribosomal protein bL19 family.

Functionally, this protein is located at the 30S-50S ribosomal subunit interface and may play a role in the structure and function of the aminoacyl-tRNA binding site. The sequence is that of Large ribosomal subunit protein bL19 from Lactococcus lactis subsp. cremoris (strain MG1363).